Here is a 550-residue protein sequence, read N- to C-terminus: CTP synthase (550 aa).

The segment at 1 to 277 is amidoligase domain; the sequence is MNGSADAGPR…GRAVERALGL (277 aa). Serine 23 contacts CTP. Serine 23 contributes to the UTP binding site. Residue 24-29 participates in ATP binding; it reads SLGKGI. Residue tyrosine 64 coordinates L-glutamine. An ATP-binding site is contributed by aspartate 81. Aspartate 81 and glutamate 151 together coordinate Mg(2+). CTP-binding positions include 158 to 160, 198 to 203, and lysine 234; these read DIE and KTKPTQ. Residues 198-203 and lysine 234 contribute to the UTP site; that span reads KTKPTQ. The Glutamine amidotransferase type-1 domain maps to 302-549; that stretch reads KIAIAGKYVK…VEAALAYQER (248 aa). Glycine 364 serves as a coordination point for L-glutamine. Residue cysteine 391 is the Nucleophile; for glutamine hydrolysis of the active site. L-glutamine-binding positions include 392 to 395, glutamate 415, and arginine 472; that span reads LGLQ. Active-site residues include histidine 522 and glutamate 524.

The protein belongs to the CTP synthase family. As to quaternary structure, homotetramer.

The enzyme catalyses UTP + L-glutamine + ATP + H2O = CTP + L-glutamate + ADP + phosphate + 2 H(+). It catalyses the reaction L-glutamine + H2O = L-glutamate + NH4(+). It carries out the reaction UTP + NH4(+) + ATP = CTP + ADP + phosphate + 2 H(+). The protein operates within pyrimidine metabolism; CTP biosynthesis via de novo pathway; CTP from UDP: step 2/2. Allosterically activated by GTP, when glutamine is the substrate; GTP has no effect on the reaction when ammonia is the substrate. The allosteric effector GTP functions by stabilizing the protein conformation that binds the tetrahedral intermediate(s) formed during glutamine hydrolysis. Inhibited by the product CTP, via allosteric rather than competitive inhibition. Catalyzes the ATP-dependent amination of UTP to CTP with either L-glutamine or ammonia as the source of nitrogen. Regulates intracellular CTP levels through interactions with the four ribonucleotide triphosphates. This Thermus thermophilus (strain ATCC BAA-163 / DSM 7039 / HB27) protein is CTP synthase.